The following is a 252-amino-acid chain: C-X-C motif chemokine 16 (252 aa).

Residues 1–25 (MMLGRTSRLLLVLLFIAYATTSGNG) form the signal peptide. Residues 26-198 (NEGSKVGSCP…RGPQAGTSAT (173 aa)) are Extracellular-facing. 2 cysteine pairs are disulfide-bonded: C34-C64 and C36-C78. Disordered regions lie at residues 115 to 145 (LPEP…QQPT) and 163 to 195 (TTTY…QAGT). Residues 125 to 145 (DTATTSQTYLPSTLQRTQQPT) show a composition bias toward polar residues. The span at 176-189 (PEAKENQKQLKENR) shows a compositional bias: basic and acidic residues. A helical membrane pass occupies residues 199–219 (VPVLSLLAIVFILAGVLLYVV). Residues 220-252 (CKRRKNQLLQHPPDLAASLYTCSRRTRAENGTL) lie on the Cytoplasmic side of the membrane.

This sequence belongs to the intercrine alpha (chemokine CxC) family. Post-translationally, glycosylated.

Its subcellular location is the membrane. Functionally, induces a strong chemotactic response. Induces calcium mobilization. Binds to CXCR6/Bonzo. Also acts as a scavenger receptor on macrophages, which specifically binds to OxLDL (oxidized low density lipoprotein), suggesting that it may be involved in pathophysiology such as atherogenesis. The protein is C-X-C motif chemokine 16 (CXCL16) of Bos taurus (Bovine).